The sequence spans 392 residues: Cytochrome b (392 aa).

The next 4 membrane-spanning stretches (helical) occupy residues 38 to 58, 82 to 104, 119 to 139, and 185 to 205; these read FGSLAGICLVIQIVTGVFLAM, WLLRYMHANGASMFLIVVHLHIF, VRCLGVVIFLLMIVTAFTGYV, and FFSLHHLLPFILVGASLLHLA. Residues His88 and His102 each coordinate heme b. Positions 189 and 203 each coordinate heme b. Residue His208 participates in a ubiquinone binding. 4 consecutive transmembrane segments (helical) span residues 231-251, 295-315, 327-347, and 354-373; these read FYVKDLVGWVAFAIFFSIWIF, SGGVAAIAPVFICLLALPFFK, IHQGIFWLLLADRLLLGWIGC, and FVTIGQIPPFVFFLFFAITP.

It belongs to the cytochrome b family. As to quaternary structure, the main subunits of complex b-c1 are: cytochrome b, cytochrome c1 and the Rieske protein. The cofactor is heme b.

The protein resides in the mitochondrion inner membrane. Functionally, component of the ubiquinol-cytochrome c reductase complex (complex III or cytochrome b-c1 complex) that is part of the mitochondrial respiratory chain. The b-c1 complex mediates electron transfer from ubiquinol to cytochrome c. Contributes to the generation of a proton gradient across the mitochondrial membrane that is then used for ATP synthesis. This chain is Cytochrome b (MT-CYB), found in Pisum sativum (Garden pea).